Consider the following 505-residue polypeptide: Protein amnionless (505 aa).

An N-terminal signal peptide occupies residues Met-1–Ala-20. Topologically, residues Thr-21–Ser-344 are extracellular. Residues Ser-345–Ala-365 form a helical membrane-spanning segment. The Cytoplasmic segment spans residues His-366–Ile-505. A disordered region spans residues Gly-451–Val-482. The segment covering Glu-473 to Val-482 has biased composition (basic and acidic residues).

In terms of tissue distribution, specifically expressed in nephrocytes.

The protein localises to the cell membrane. Its function is as follows. Required in the nephrocyte for normal uptake of proteins and elimination of toxins, and for maintenance of endocytic trafficking structures. May function together with Cubn. In Drosophila melanogaster (Fruit fly), this protein is Protein amnionless.